The sequence spans 173 residues: Alpha-crystallin A chain (173 aa).

At M1 the chain carries N-acetylmethionine. Residues M1 to E63 form a required for complex formation with BFSP1 and BFSP2 region. The residue at position 6 (Q6) is a Deamidated glutamine; partial. S45 is modified (phosphoserine). Q50 carries the deamidated glutamine; partial modification. The sHSP domain maps to L52 to S162. At K70 the chain carries N6-acetyllysine. Deamidated glutamine; partial is present on Q90. K99 is subject to N6-acetyllysine. H100 serves as a coordination point for Zn(2+). N101 carries the post-translational modification Deamidated asparagine; partial. Residues E102 and H107 each coordinate Zn(2+). The residue at position 122 (S122) is a Phosphoserine. Position 123 is a deamidated asparagine; partial (N123). The interval P144–S173 is disordered. The span at G153 to P167 shows a compositional bias: basic and acidic residues. H154 contacts Zn(2+). S162 is a glycosylation site (O-linked (GlcNAc) serine).

It belongs to the small heat shock protein (HSP20) family. In terms of assembly, heteromer composed of three CRYAA and one CRYAB subunits. Inter-subunit bridging via zinc ions enhances stability, which is crucial as there is no protein turn over in the lens. Can also form homodimers and homotetramers (dimers of dimers) which serve as the building blocks of homooligomers. Within homooligomers, the zinc-binding motif is created from residues of 3 different molecules. His-100 and Glu-102 from one molecule are ligands of the zinc ion, and His-107 and His-154 residues from additional molecules complete the site with tetrahedral coordination geometry. Part of a complex required for lens intermediate filament formation composed of BFSP1, BFSP2 and CRYAA. Acetylation at Lys-70 may increase chaperone activity. Post-translationally, undergoes age-dependent proteolytical cleavage at the C-terminus.

The protein localises to the cytoplasm. The protein resides in the nucleus. Functionally, contributes to the transparency and refractive index of the lens. Acts as a chaperone, preventing aggregation of various proteins under a wide range of stress conditions. Required for the correct formation of lens intermediate filaments as part of a complex composed of BFSP1, BFSP2 and CRYAA. The chain is Alpha-crystallin A chain (CRYAA) from Giraffa camelopardalis (Giraffe).